We begin with the raw amino-acid sequence, 154 residues long: Protein X (154 aa).

The disordered stretch occupies residues 28-50 (RPLPGPLGAVPPSSPSAVPADDG). A compositionally biased stretch (low complexity) spans 33-48 (PLGAVPPSSPSAVPAD). Residues 68–117 (PCALRFTSARRMETTVNAPWSLPTVLHKRTLGLSGWSMTWIEEYIKDCVF) are mitochondrial targeting sequence.

It belongs to the orthohepadnavirus protein X family. In terms of assembly, may form homodimer. May interact with host CEBPA, CFLAR, CREB1, DDB1, E4F1, HBXIP, HSPD1/HSP60, NFKBIA, POLR2E and SMAD4. Interacts with host SMC5-SMC6 complex and induces its degradation. Interacts with host TRPC4AP; leading to prevent ubiquitination of TRPC4AP. Interacts with host PLSCR1; this interaction promotes ubiquitination and degradation of HBx and impairs HBx-mediated cell proliferation. In terms of processing, a fraction may be phosphorylated in insect cells and HepG2 cells, a human hepatoblastoma cell line. Phosphorylated in vitro by host protein kinase C or mitogen-activated protein kinase. N-acetylated in insect cells.

The protein localises to the host cytoplasm. It localises to the host nucleus. It is found in the host mitochondrion. Multifunctional protein that plays a role in silencing host antiviral defenses and promoting viral transcription. Does not seem to be essential for HBV infection. May be directly involved in development of cirrhosis and liver cancer (hepatocellular carcinoma). Most of cytosolic activities involve modulation of cytosolic calcium. The effect on apoptosis is controversial depending on the cell types in which the studies have been conducted. May induce apoptosis by localizing in mitochondria and causing loss of mitochondrial membrane potential. May also modulate apoptosis by binding host CFLAR, a key regulator of the death-inducing signaling complex (DISC). Promotes viral transcription by using the host E3 ubiquitin ligase DDB1 to target the SMC5-SMC6 complex to proteasomal degradation. This host complex would otherwise bind to viral episomal DNA, and prevents its transcription. Moderately stimulates transcription of many different viral and cellular transcription elements. Promoters and enhancers stimulated by HBx contain DNA binding sites for NF-kappa-B, AP-1, AP-2, c-EBP, ATF/CREB, or the calcium-activated factor NF-AT. The protein is Protein X of Homo sapiens (Human).